Consider the following 561-residue polypeptide: DNA ligase B (561 aa).

Lys-125 acts as the N6-AMP-lysine intermediate in catalysis.

This sequence belongs to the NAD-dependent DNA ligase family. LigB subfamily.

The enzyme catalyses NAD(+) + (deoxyribonucleotide)n-3'-hydroxyl + 5'-phospho-(deoxyribonucleotide)m = (deoxyribonucleotide)n+m + AMP + beta-nicotinamide D-nucleotide.. Its function is as follows. Catalyzes the formation of phosphodiester linkages between 5'-phosphoryl and 3'-hydroxyl groups in double-stranded DNA using NAD as a coenzyme and as the energy source for the reaction. This chain is DNA ligase B, found in Salmonella enteritidis PT4 (strain P125109).